A 551-amino-acid chain; its full sequence is Prunin 1 Pru du 6 (551 aa).

Positions 1–20 (MAKAFVFSLCLLLVFNGCLA) are cleaved as a signal peptide. Cystine bridges form between cysteine 32–cysteine 65 and cysteine 108–cysteine 374. The Cupin type-1 1 domain occupies 37-312 (LQAREPDNRI…ALNVNEETAR (276 aa)). 3 disordered regions span residues 111–194 (TFEE…QKTR), 238–293 (NPRK…NVFS), and 329–360 (GNLD…RQQQ). 3 stretches are compositionally biased toward low complexity: residues 114 to 124 (ESQQSSQQGRQ), 132 to 148 (QQQQ…QQEQ), and 168 to 185 (QEQQ…QQFR). Arginine 194 is a binding site for Ca(2+). A compositionally biased stretch (low complexity) spans 254 to 275 (QQGQSQPRQQGEQGRPGQHQQP). The span at 282-293 (QEQQGNGNNVFS) shows a compositional bias: polar residues. Over residues 339–350 (GRQEREHEERQQ) the composition is skewed to basic and acidic residues. A compositionally biased stretch (low complexity) spans 351–360 (EQLQQERQQQ). An NGXEET; peptidase recognition motif motif is present at residues 367 to 372 (NGLEET). The Cupin type-1 2 domain occupies 380 to 529 (ENIGNPERAD…AYQISREQAR (150 aa)).

It belongs to the 11S seed storage protein (globulins) family. In terms of assembly, hexamer of two trimers; each subunit is composed of an acidic and a basic chain derived from a single precursor and linked by a disulfide bond. Post-translationally, proteolytically processed from a single precursor to produce an acidic and a basic chain that are linked by a disulfide bond. Expressed in seed (at protein level). Expressed in seed.

Its function is as follows. Seed storage protein. This Prunus dulcis (Almond) protein is Prunin 1 Pru du 6.